Reading from the N-terminus, the 979-residue chain is Protocadherin alpha-9 (979 aa).

The N-terminal stretch at 1–59 is a signal peptide; that stretch reads MRLGNRPEDIRTCVHLRWHIHGLLRQENASVVISKCLRHGAWRLLLWLLLLATWDVGSG. The Extracellular portion of the chain corresponds to 60–726; the sequence is QLHYSVPEEA…RREASLMDVN (667 aa). 6 consecutive Cadherin domains span residues 64 to 163, 164 to 272, 273 to 380, 381 to 485, 486 to 595, and 611 to 707; these read SVPE…PPIF, SVAE…APVF, DRSV…APEI, VLTS…APAF, AHPE…PPTL, and VSRS…VPKA. Residues asparagine 287 and asparagine 295 are each glycosylated (N-linked (GlcNAc...) asparagine). Residue asparagine 578 is glycosylated (N-linked (GlcNAc...) asparagine). The helical transmembrane segment at 727 to 747 threads the bilayer; the sequence is VYLIIAICAVSSLLVLTLLLY. The Cytoplasmic portion of the chain corresponds to 748-979; that stretch reads TALRCSAVPM…GNSTTDNSDQ (232 aa). 5 PXXP repeats span residues 763 to 766, 828 to 831, 861 to 864, 902 to 905, and 920 to 923; these read LGKP, PRQP, PGGP, PGNP, and PGSP. The segment at 763-923 is 5 X 4 AA repeats of P-X-X-P; it reads LGKPTLVCSS…PDKFIIPGSP (161 aa). The segment at 859-979 is disordered; sequence AGPGGPDQQW…GNSTTDNSDQ (121 aa). Positions 938 to 952 are enriched in basic and acidic residues; it reads DKSDFITFGKKEETK.

The protein resides in the cell membrane. Its function is as follows. Potential calcium-dependent cell-adhesion protein. May be involved in the establishment and maintenance of specific neuronal connections in the brain. In Mus musculus (Mouse), this protein is Protocadherin alpha-9.